Here is a 331-residue protein sequence, read N- to C-terminus: Glycerol-3-phosphate dehydrogenase [NAD(P)+] (331 aa).

5 residues coordinate NADPH: serine 10, tryptophan 11, arginine 31, arginine 32, and lysine 105. 2 residues coordinate sn-glycerol 3-phosphate: lysine 105 and glycine 135. Position 139 (alanine 139) interacts with NADPH. Sn-glycerol 3-phosphate contacts are provided by lysine 190, aspartate 243, serine 253, arginine 254, and asparagine 255. The active-site Proton acceptor is lysine 190. Residue arginine 254 coordinates NADPH. Valine 279 and glutamate 281 together coordinate NADPH.

It belongs to the NAD-dependent glycerol-3-phosphate dehydrogenase family.

Its subcellular location is the cytoplasm. It catalyses the reaction sn-glycerol 3-phosphate + NAD(+) = dihydroxyacetone phosphate + NADH + H(+). The enzyme catalyses sn-glycerol 3-phosphate + NADP(+) = dihydroxyacetone phosphate + NADPH + H(+). Its pathway is membrane lipid metabolism; glycerophospholipid metabolism. Its function is as follows. Catalyzes the reduction of the glycolytic intermediate dihydroxyacetone phosphate (DHAP) to sn-glycerol 3-phosphate (G3P), the key precursor for phospholipid synthesis. In Corynebacterium diphtheriae (strain ATCC 700971 / NCTC 13129 / Biotype gravis), this protein is Glycerol-3-phosphate dehydrogenase [NAD(P)+].